We begin with the raw amino-acid sequence, 668 residues long: UvrABC system protein B (668 aa).

A Helicase ATP-binding domain is found at 36-423 (DNIKGGEKAQ…TETVVEQIIR (388 aa)). 49–56 (GATGTGKT) serves as a coordination point for ATP. Positions 102–125 (YYDYYQPEAYVPSSDTYIEKDSSI) match the Beta-hairpin motif. The Helicase C-terminal domain maps to 440–606 (QMDDLLGEIN…TIKKEIRDLI (167 aa)). The 36-residue stretch at 632–667 (QEAIKKLQKQMHEAAELLDFELAAQIRDMVLELKSM) folds into the UVR domain.

This sequence belongs to the UvrB family. Forms a heterotetramer with UvrA during the search for lesions. Interacts with UvrC in an incision complex.

Its subcellular location is the cytoplasm. In terms of biological role, the UvrABC repair system catalyzes the recognition and processing of DNA lesions. A damage recognition complex composed of 2 UvrA and 2 UvrB subunits scans DNA for abnormalities. Upon binding of the UvrA(2)B(2) complex to a putative damaged site, the DNA wraps around one UvrB monomer. DNA wrap is dependent on ATP binding by UvrB and probably causes local melting of the DNA helix, facilitating insertion of UvrB beta-hairpin between the DNA strands. Then UvrB probes one DNA strand for the presence of a lesion. If a lesion is found the UvrA subunits dissociate and the UvrB-DNA preincision complex is formed. This complex is subsequently bound by UvrC and the second UvrB is released. If no lesion is found, the DNA wraps around the other UvrB subunit that will check the other stand for damage. In Streptococcus thermophilus (strain CNRZ 1066), this protein is UvrABC system protein B.